Reading from the N-terminus, the 85-residue chain is Large ribosomal subunit protein bL27 (85 aa).

The disordered stretch occupies residues 1 to 21 (MAHKKGASSSRNGRDSNAQRL). Residues 7–19 (ASSSRNGRDSNAQ) show a composition bias toward polar residues.

Belongs to the bacterial ribosomal protein bL27 family.

The polypeptide is Large ribosomal subunit protein bL27 (Beutenbergia cavernae (strain ATCC BAA-8 / DSM 12333 / CCUG 43141 / JCM 11478 / NBRC 16432 / NCIMB 13614 / HKI 0122)).